The chain runs to 208 residues: Guanylate kinase (208 aa).

One can recognise a Guanylate kinase-like domain in the interval 4–184 (GTLYIVSAPS…ALMDFKAIIR (181 aa)). 11–18 (APSGAGKS) provides a ligand contact to ATP.

Belongs to the guanylate kinase family.

The protein resides in the cytoplasm. It carries out the reaction GMP + ATP = GDP + ADP. Its function is as follows. Essential for recycling GMP and indirectly, cGMP. The sequence is that of Guanylate kinase from Photobacterium profundum (strain SS9).